The following is a 294-amino-acid chain: MINGIINLKKEAGMTSHDAVFKLRKLLQEKKIGHGGTLDPDVVGVLPIAVGKATRVIEYMTEAGKVYEGQVTLGYSTTTEDASGEVVARSSLPAVLTEELVDQTMTTFLGKITQTPPMYSAVKVNGRKLYEYARAGESVERPRREVTISLFERTSPLNFTEDGLCRFSFKVACSKGTYVRTLAVDLGRALGVESHMSFLQRSASAGLTLETAYTLGEIADMVSKQEMSFLLPIEYGVADLPKMVIDDTELTEISFGRRLSLPSQEPLLAAFHGEKVIAILEKRDQEYKPKKVLI.

Aspartate 39 functions as the Nucleophile in the catalytic mechanism.

Belongs to the pseudouridine synthase TruB family. Type 1 subfamily.

It catalyses the reaction uridine(55) in tRNA = pseudouridine(55) in tRNA. Responsible for synthesis of pseudouridine from uracil-55 in the psi GC loop of transfer RNAs. The chain is tRNA pseudouridine synthase B from Streptococcus pyogenes serotype M6 (strain ATCC BAA-946 / MGAS10394).